Consider the following 283-residue polypeptide: Tetraspanin-33 (283 aa).

At 1–24 (MARRPRAPAASGEEFSFVSPLVKY) the chain is on the cytoplasmic side. A helical transmembrane segment spans residues 25–45 (LLFFFNMLFWVISMVMVAVGV). Residues 46-64 (YARLMKHAEAALACLAVDP) are Extracellular-facing. The helical transmembrane segment at 65-85 (AILLIVVGVLMFLLTFCGCIG) threads the bilayer. Topologically, residues 86–96 (SLRENICLLQT) are cytoplasmic. The chain crosses the membrane as a helical span at residues 97-117 (FSLCLTAVFLLQLAAGILGFV). Topologically, residues 118-235 (FSDKARGKVS…DKLVNWIHSN (118 aa)) are extracellular. Intrachain disulfides connect C156-C224, C157-C189, C173-C183, and C190-C203. N-linked (GlcNAc...) asparagine glycosylation is present at N172. Residues 236–256 (LFLLGGVALGLAIPQLVGILL) traverse the membrane as a helical segment. At 257–283 (SQILVNQIKDQIKLQLYNQQHRADPWY) the chain is on the cytoplasmic side.

It belongs to the tetraspanin (TM4SF) family. As to quaternary structure, homodimer; disulfide-linked. Interacts (via extracellular domain) with ADAM10 (via extracellular domain). Interacts (via cytoplasmic domain) with PLEKHA7 (via WW domains); the interaction is dependent on PDZD11 being bound to PLEKHA7 and facilitates the docking of ADAM10 to zonula adherens. Predominantly expressed in erythroblasts.

The protein resides in the cell membrane. Its subcellular location is the cell junction. The protein localises to the adherens junction. It localises to the cytoplasm. Part of TspanC8 subgroup, composed of 6 members that interact with the transmembrane metalloprotease ADAM10. This interaction is required for ADAM10 exit from the endoplasmic reticulum and for enzymatic maturation and trafficking to the cell surface as well as substrate specificity. Different TspanC8/ADAM10 complexes have distinct substrates. Plays an important role in normal erythropoiesis. It has a role in the differentiation of erythroid progenitors. Negatively regulates ligand-induced Notch activity probably by regulating ADAM10 activity. Mediates docking of ADAM10 to zonula adherens by interacting with ADAM10 and, in a PDZD11-dependent manner, with the zonula adherens protein PLEKHA7. The protein is Tetraspanin-33 of Homo sapiens (Human).